We begin with the raw amino-acid sequence, 224 residues long: Ribonuclease HII (224 aa).

Residues 17–201 (GTVIGVDEAG…VLSNLSVKKV (185 aa)) form the RNase H type-2 domain. Residues Asp23, Glu24, and Asp111 each contribute to the a divalent metal cation site.

The protein belongs to the RNase HII family. Requires Mn(2+) as cofactor. Mg(2+) serves as cofactor.

The protein resides in the cytoplasm. It carries out the reaction Endonucleolytic cleavage to 5'-phosphomonoester.. In terms of biological role, endonuclease that specifically degrades the RNA of RNA-DNA hybrids. The chain is Ribonuclease HII from Pseudothermotoga lettingae (strain ATCC BAA-301 / DSM 14385 / NBRC 107922 / TMO) (Thermotoga lettingae).